The primary structure comprises 716 residues: Epidermal growth factor receptor kinase substrate 8-like protein 2 (716 aa).

2 disordered regions span residues 1–25 (MSQS…DGVA) and 182–243 (PQTL…SQEE). Positions 46–202 (MHETSQYHVQ…RQRQSILPPP (157 aa)) constitute a PID domain. Residues 199–208 (LPPPQGPAPI) show a composition bias toward pro residues. Residues 234–243 (GFRRRESQEE) show a composition bias toward basic and acidic residues. S240 carries the phosphoserine modification. Position 304 is a phosphothreonine (T304). The interval 449–488 (VSPVSRQSIRNSQKHSPTSEPTPPGDALPPVSSPHTHRGY) is disordered. S450 is modified (phosphoserine). Over residues 452 to 467 (VSRQSIRNSQKHSPTS) the composition is skewed to polar residues. Phosphothreonine is present on T470. The region spanning 493 to 552 (AMAKYVKILYDFTARNANELSVLKDEVLEVLEDGRQWWKLRSRSGQAGYVPCNILGEARP) is the SH3 domain. At S571 the chain carries Phosphoserine.

It belongs to the EPS8 family. Interacts with ABI1. Part of a complex that contains SOS1, ABI1 and EPS8L2. Associates with F-actin.

The protein resides in the cytoplasm. It localises to the cell projection. Its subcellular location is the stereocilium. Its function is as follows. Stimulates guanine exchange activity of SOS1. May play a role in membrane ruffling and remodeling of the actin cytoskeleton. In the cochlea, is required for stereocilia maintenance in adult hair cells. The sequence is that of Epidermal growth factor receptor kinase substrate 8-like protein 2 (EPS8L2) from Pongo abelii (Sumatran orangutan).